The chain runs to 757 residues: MSTANRLATIAGQVSKAIAPQWPLSQWIAVNPFWHYRQQPVAGVAAHWRYSAGTRLLMSPDFYWQQWQQNRIDAALVTNKMVNELEQRSLLKAQLPQWRNLSRLVDKYTRRRRKMRWNDEVVLQISQTCGLFMQFPTRFQQAGKDSSLYQHWLTISRADRGIETLMDEAELTELFAQLPDDPHKLIQVCHDNFLSDASDYALRCYSQALISDLWGWAAAFSYQDARQDSQWVFELLCIRLAWEYILWQLAERTNTKVYQQLQQALSAQVENCEGQVAHIEQHNSLLWQWQAAYERSQLNRLQFKSDTVEESNAPDVQAVFCIDVRSERYRRALEQAGKSLGSYVQSKGFAGFFGVPLAIQRKGRDVPHVPGLLQPAYYIKAPARKQSVGSLLSNMFNAPVSMFSGVEALGLSKLKSLLTGVPGQLATANNAYIADGSICEHNGEASMESLVGICQQALAGMQFTRFARHIVLVGHGSHHSNNAQRAGLNCGACGGQTGALSARVLVRLLNNQNIREHLREQGVAIPDATQFHSAMHETVTDKVIWLSNTVPDSVKQVFRAATEKLTQACGESEKDRKTRSGHWAELRPEWGLADNNVLFFGQADRLTSADTIGSNFLHDYNSINDPDGELLAQLMSAPGLVANWINWQYYCSVTEPKQLGSGNKLLHNRVANDIGVFEGNGGDLRQGLAWQSVHNGSDFVHRPMRLQVIVEADEATIQRALAKAVAFNELFEQQWINLHRLNARGELCPVTTPVTAK.

Positions 321, 323, 475, and 490 each coordinate Zn(2+).

It belongs to the inorganic carbon transporter (TC 9.A.2) DabA family. As to quaternary structure, forms a complex with DabB. It depends on Zn(2+) as a cofactor.

The protein localises to the cell inner membrane. Part of an energy-coupled inorganic carbon pump. In Idiomarina loihiensis (strain ATCC BAA-735 / DSM 15497 / L2-TR), this protein is Probable inorganic carbon transporter subunit DabA.